A 147-amino-acid chain; its full sequence is Small ribosomal subunit protein uS12 (147 aa).

This sequence belongs to the universal ribosomal protein uS12 family. In terms of assembly, part of the 30S ribosomal subunit.

Its function is as follows. With S4 and S5 plays an important role in translational accuracy. Located at the interface of the 30S and 50S subunits. In Pyrococcus horikoshii (strain ATCC 700860 / DSM 12428 / JCM 9974 / NBRC 100139 / OT-3), this protein is Small ribosomal subunit protein uS12.